The following is a 470-amino-acid chain: Fumarate hydratase class II (470 aa).

Substrate contacts are provided by residues 99 to 101, 129 to 132, 139 to 141, and Thr187; these read SGT, HPND, and SSN. His188 acts as the Proton donor/acceptor in catalysis. Ser318 is an active-site residue. Substrate contacts are provided by residues Ser319 and 324 to 326; that span reads KIN.

Belongs to the class-II fumarase/aspartase family. Fumarase subfamily. As to quaternary structure, homotetramer.

It localises to the cytoplasm. It carries out the reaction (S)-malate = fumarate + H2O. It functions in the pathway carbohydrate metabolism; tricarboxylic acid cycle; (S)-malate from fumarate: step 1/1. In terms of biological role, involved in the TCA cycle. Catalyzes the stereospecific interconversion of fumarate to L-malate. The polypeptide is Fumarate hydratase class II (Halobacterium salinarum (strain ATCC 700922 / JCM 11081 / NRC-1) (Halobacterium halobium)).